The sequence spans 895 residues: Endochitinase 2 (895 aa).

Positions 1–22 (MGLTNILAAFIAVSSLFIQSLA) are cleaved as a signal peptide. Residues 29 to 340 (SNLAVYWGQG…DIMKEVLLRC (312 aa)) enclose the GH18 domain. Asn-90 carries N-linked (GlcNAc...) asparagine glycosylation. The active-site Proton donor is Glu-175. Positions 343–712 (DPPTSTVTST…APSSSTTEDR (370 aa)) are disordered. Residues 346 to 425 (TSTVTSTISA…ISTRSASTET (80 aa)) show a composition bias toward low complexity. Over residues 426 to 478 (VTTRSQEPPSTTISTRPASTETVTTRSQEPPSSTISTRSASTETVTTRSQEPP) the composition is skewed to polar residues. The span at 479 to 505 (SSTISTRSASTETSTSSQDSPSTTIST) shows a compositional bias: low complexity. Over residues 506 to 543 (KSAPTGTVTTRSQDLPSTTISTRSPETETETVTTKSQD) the composition is skewed to polar residues. Residues 544–555 (SPSITLSTRSSS) show a composition bias toward low complexity. Polar residues predominate over residues 556 to 577 (AETVSTRSQHSSSTTISTKSAP). The span at 578–589 (TETGTTSEHSTS) shows a compositional bias: low complexity. The span at 590 to 657 (MPVSTRSAST…ISTELPSQTH (68 aa)) shows a compositional bias: polar residues. Composition is skewed to low complexity over residues 658-692 (STTDSTPVSSSPTIPSGSTTIIPGTASDPVSAPTT) and 699-712 (TLTLAPSSSTTEDR). Gly-866 is lipidated: GPI-anchor amidated glycine. Positions 867–895 (GAMTVRSMDVVAKALITAGAAVLGLFLGL) are cleaved as a propeptide — removed in mature form.

It belongs to the glycosyl hydrolase 18 family. Chitinase class III subfamily.

The protein localises to the cell membrane. The catalysed reaction is Random endo-hydrolysis of N-acetyl-beta-D-glucosaminide (1-&gt;4)-beta-linkages in chitin and chitodextrins.. Functionally, may be associated with endosporulation. In Coccidioides immitis (strain RS) (Valley fever fungus), this protein is Endochitinase 2 (CTS2).